The sequence spans 222 residues: Vesicle-associated membrane protein 724 (222 aa).

The Cytoplasmic portion of the chain corresponds to 1–197; sequence MGQESFIYSF…LWYQNMKIKL (197 aa). The Longin domain occupies 10–115; that stretch reads FVARGTMILA…SLNKEFGPVM (106 aa). One can recognise a v-SNARE coiled-coil homology domain in the interval 131-191; that stretch reads KLIKVKAQVS…TQVRRKLWYQ (61 aa). A helical; Anchor for type IV membrane protein transmembrane segment spans residues 198-218; the sequence is VVLGILLLLVLIIWISVCHGF. At 219–222 the chain is on the vesicular side; the sequence is NCTD.

It belongs to the synaptobrevin family. As to expression, expressed in flowers, leaves, stems and roots.

The protein resides in the cell membrane. The protein localises to the early endosome membrane. In terms of biological role, involved in the targeting and/or fusion of transport vesicles to their target membrane. The sequence is that of Vesicle-associated membrane protein 724 from Arabidopsis thaliana (Mouse-ear cress).